A 191-amino-acid chain; its full sequence is Accessory gene regulator protein B (191 aa).

Helical transmembrane passes span 45-65 (IVVYGLALLFHVFLYTLTVHL), 81-101 (STFACYIESIILFVILPWILI), 108-128 (IFMIVLAAVAFILICLYSPAI), 144-164 (ITAIFVAGILLIISFFIKQPF), and 165-185 (NELVQLGIVLIGAAQLPIFFP).

Belongs to the AgrB family.

It localises to the cell membrane. Essential for the production of a quorum sensing system signal molecule, the autoinducing peptide (AIP). This quorum sensing system is responsible for the regulation of the expression of virulence factor genes. Involved in the proteolytic processing of AgrD, the precursor of AIP. This Staphylococcus carnosus (strain TM300) protein is Accessory gene regulator protein B.